Consider the following 301-residue polypeptide: Sulfate adenylyltransferase subunit 2 (301 aa).

The tract at residues arginine 279–phenylalanine 301 is disordered.

This sequence belongs to the PAPS reductase family. CysD subfamily. Heterodimer composed of CysD, the smaller subunit, and CysN.

It catalyses the reaction sulfate + ATP + H(+) = adenosine 5'-phosphosulfate + diphosphate. It participates in sulfur metabolism; hydrogen sulfide biosynthesis; sulfite from sulfate: step 1/3. Functionally, with CysN forms the ATP sulfurylase (ATPS) that catalyzes the adenylation of sulfate producing adenosine 5'-phosphosulfate (APS) and diphosphate, the first enzymatic step in sulfur assimilation pathway. APS synthesis involves the formation of a high-energy phosphoric-sulfuric acid anhydride bond driven by GTP hydrolysis by CysN coupled to ATP hydrolysis by CysD. The chain is Sulfate adenylyltransferase subunit 2 from Geotalea uraniireducens (strain Rf4) (Geobacter uraniireducens).